Here is a 934-residue protein sequence, read N- to C-terminus: Complement component C6 (934 aa).

Residues Met1–Ala21 form the signal peptide. 11 disulfides stabilise this stretch: Cys22-Cys61, Cys24-Cys65, Cys35-Cys73, Cys39-Cys78, Cys82-Cys117, Cys93-Cys127, Cys96-Cys133, Cys140-Cys151, Cys146-Cys164, Cys158-Cys173, and Cys180-Cys218. TSP type-1 domains lie at Cys22–Pro79 and Asn81–Lys134. The LDL-receptor class A domain occupies Thr138–Arg175. 6 residues coordinate Ca(2+): Leu156, Asn159, Glu161, Asp163, Asp169, and Glu170. Residues Thr176 to Gln522 enclose the MACPF domain. A beta stranded membrane pass occupies residues Phe278–Asn290. N-linked (GlcNAc...) asparagine glycosylation is present at Asn324. 16 disulfide bridges follow: Cys399-Cys420, Cys499-Cys623, Cys521-Cys570, Cys523-Cys539, Cys526-Cys541, Cys543-Cys552, Cys577-Cys611, Cys589-Cys601, Cys644-Cys686, Cys672-Cys699, Cys704-Cys746, Cys732-Cys761, Cys773-Cys823, Cys784-Cys801, Cys786-Cys837, and Cys793-Cys816. A beta stranded transmembrane segment spans residues Tyr402 to His415. One can recognise an EGF-like domain in the interval Cys523–Glu553. The 48-residue stretch at Asp565–Thr612 folds into the TSP type-1 3 domain. CCP regions lie at residues Cys611 to Pro688 and Asp689 to Ile765. 2 Sushi domains span residues Ser642–Arg701 and Thr702–Gln763. Residues Ser642–Asp934 are C5b-binding domain. The tract at residues Leu766–Gly840 is factor I module (FIM) 1. The Kazal-like 1 domain occupies Ile785–Glu839. Residues Asn825, Asn855, and Asn872 are each glycosylated (N-linked (GlcNAc...) asparagine). The interval Lys858 to Asp934 is factor I module (FIM) 2. Intrachain disulfides connect Cys862-Cys873, Cys867-Cys919, Cys880-Cys897, Cys882-Cys932, and Cys888-Cys912. The Kazal-like 2 domain maps to His876–Asp934.

The protein belongs to the complement C6/C7/C8/C9 family. As to quaternary structure, component of the membrane attack complex (MAC), composed of complement C5b, C6, C7, C8A, C8B, C8G and multiple copies of the pore-forming subunit C9. Post-translationally, all cysteine residues are assumed to be cross-linked to one another. Individual modules containing an even number of conserved cysteine residues are supposed to have disulfide linkages only within the same module.

It is found in the secreted. The protein resides in the target cell membrane. Membrane attack complex (MAC) assembly is inhibited by CD59, thereby protecting self-cells from damage during complement activation. MAC assembly is also inhibited by clusterin (CLU) chaperones that inhibit polymerization of C9. In terms of biological role, component of the membrane attack complex (MAC), a multiprotein complex activated by the complement cascade, which inserts into a target cell membrane and forms a pore, leading to target cell membrane rupture and cell lysis. The MAC is initiated by proteolytic cleavage of C5 into complement C5b in response to the classical, alternative, lectin and GZMK complement pathways. The complement pathways consist in a cascade of proteins that leads to phagocytosis and breakdown of pathogens and signaling that strengthens the adaptive immune system. Together with component C5b, involved in MAC complex assembly: complement C5b and C6 associate with the outer leaflet of target cell membrane, reducing the energy for membrane bending. This chain is Complement component C6, found in Mus musculus (Mouse).